A 191-amino-acid polypeptide reads, in one-letter code: MLSHLRPAITMTVLFTGLCGLAYPLAITGVAQAVLPAQANGSIVTKGDAVVGSALIGQAFTSPRYFASRPSATSNSPYNPLASGGTNLGATSQKLKDQIAAAVTAWQANGRSGPVPADAVTSSASGLDPDISPENARQQVALVAKARNMPEKDVAALVEAQVQPRLLGVIGEPRVNVLRLNMALDAAGATQ.

The helical transmembrane segment at 13-35 threads the bilayer; that stretch reads VLFTGLCGLAYPLAITGVAQAVL. The segment at 112–132 is disordered; sequence SGPVPADAVTSSASGLDPDIS.

This sequence belongs to the KdpC family. As to quaternary structure, the system is composed of three essential subunits: KdpA, KdpB and KdpC.

It localises to the cell inner membrane. Its function is as follows. Part of the high-affinity ATP-driven potassium transport (or Kdp) system, which catalyzes the hydrolysis of ATP coupled with the electrogenic transport of potassium into the cytoplasm. This subunit acts as a catalytic chaperone that increases the ATP-binding affinity of the ATP-hydrolyzing subunit KdpB by the formation of a transient KdpB/KdpC/ATP ternary complex. This chain is Potassium-transporting ATPase KdpC subunit, found in Allorhizobium ampelinum (strain ATCC BAA-846 / DSM 112012 / S4) (Agrobacterium vitis (strain S4)).